Reading from the N-terminus, the 172-residue chain is Large ribosomal subunit protein uL10 (172 aa).

The protein belongs to the universal ribosomal protein uL10 family. Part of the ribosomal stalk of the 50S ribosomal subunit. The N-terminus interacts with L11 and the large rRNA to form the base of the stalk. The C-terminus forms an elongated spine to which L12 dimers bind in a sequential fashion forming a multimeric L10(L12)X complex.

Functionally, forms part of the ribosomal stalk, playing a central role in the interaction of the ribosome with GTP-bound translation factors. The protein is Large ribosomal subunit protein uL10 of Xanthobacter autotrophicus (strain ATCC BAA-1158 / Py2).